The sequence spans 183 residues: Probable calcium-binding protein CML47 (183 aa).

2 consecutive EF-hand domains span residues 112–147 (MGKE…LGYD) and 149–183 (CTKM…KSFS). Residues Asp125, Asn127, Asp129, Glu136, Asp162, Asn164, Asp166, Lys168, and Glu173 each coordinate Ca(2+).

Potential calcium sensor. The protein is Probable calcium-binding protein CML47 (CML47) of Arabidopsis thaliana (Mouse-ear cress).